The sequence spans 215 residues: Translation initiation factor 6 (215 aa).

Belongs to the eIF-6 family.

Functionally, binds to the 50S ribosomal subunit and prevents its association with the 30S ribosomal subunit to form the 70S initiation complex. This chain is Translation initiation factor 6, found in Archaeoglobus fulgidus (strain ATCC 49558 / DSM 4304 / JCM 9628 / NBRC 100126 / VC-16).